A 358-amino-acid polypeptide reads, in one-letter code: CCAAT/enhancer-binding protein alpha (358 aa).

The tract at residues 1-55 (MESADFYEAEPRPPMSSHLQSPPHAPSSAAFGFPRGAGPAQPPAPPAAPEPLGGI) is disordered. Residues 1–70 (MESADFYEAE…SIDISAYIDP (70 aa)) are required to repress E2F1:TFDP1-mediated transcription, to inhibit cell cycle and to induce adipocyte differentiation. A compositionally biased stretch (low complexity) spans 29-39 (AAFGFPRGAGP). The span at 40-49 (AQPPAPPAAP) shows a compositional bias: pro residues. Residues 54–72 (GICEHETSIDISAYIDPAA) form a required for interaction with TRIB1 region. The segment at 128 to 204 (PPGYGCAAAG…HPPPAHLAAP (77 aa)) is required to induce adipocyte differentiation. K161 is subject to N6-acetyllysine; alternate. K161 is covalently cross-linked (Glycyl lysine isopeptide (Lys-Gly) (interchain with G-Cter in SUMO2); alternate). Disordered stretches follow at residues 178–201 (LFPYQPPPPPPPSHPHPHPPPAHL) and 217–291 (TMHL…RRER). Composition is skewed to pro residues over residues 181-199 (YQPPPPPPPSHPHPHPPPA) and 224-238 (HPTPPPTPVPSPHPA). Residues 182-198 (QPPPPPPPSHPHPHPPP) are required to functionally cooperate with SREBF1 in promoter activation. The residue at position 190 (S190) is a Phosphoserine. Residues T226 and T230 each carry the phosphothreonine; by GSK3 modification. Position 234 is a phosphoserine; by GSK3 (S234). Residues 239-259 (PALGAAGLPGPGSALKGLGAA) show a composition bias toward low complexity. The interaction with FOXO1 stretch occupies residues 244–358 (AGLPGPGSAL…SLVKAMGNCA (115 aa)). Positions 276 to 291 (KSVDKNSNEYRVRRER) are enriched in basic and acidic residues. A bZIP domain is found at 282 to 345 (SNEYRVRRER…DTLRGIFRQL (64 aa)). Residues 285 to 300 (YRVRRERNNIAVRKSR) mediate DNA binding. The tract at residues 286–313 (RVRRERNNIAVRKSRDKAKQRNVETQQK) is basic motif. Residues 317 to 345 (LTSDNDRLRKRVEQLSRELDTLRGIFRQL) form a leucine-zipper region.

The protein belongs to the bZIP family. C/EBP subfamily. As to quaternary structure, binds DNA as a homodimer and as a heterodimer. Can form stable heterodimers with CEBPB, CEBPD, CEBPE and CEBPG. Interacts with PRDM16. Interacts with UBN1. Interacts with ZNF638; this interaction increases transcriptional activation. Interacts with the complex TFDP2:E2F1; the interaction prevents CEBPA binding to target gene promoters and represses its transcriptional activity. Interacts with RB1. Interacts (when phosphorylated at Ser-190) with CDK2, CDK4, E2F4 and SMARCA2. Interacts with SREBPF1. Interacts with FOXO1 (via the Fork-head domain); the interaction increases when FOXO1 is deacetylated. Interacts with SIX1. Interacts (via recognition sequence) with TRIB1. Interacts (via bZIP domain) with OVOL2 (via zinc-finger domains); the interaction inhibits the transcription factor activity of CEBPA and is required to repress adipogenesis. In terms of assembly, interacts with TAF1A and UBTF. Interacts with TAF1A and UBTF. Interacts with NPM1. As to quaternary structure, (Microbial infection) Interacts with HBV protein X. In terms of assembly, (Microbial infection) Interacts with Epstein-Barr virus lytic switch protein BZLF1; this interaction induces G1 cell cycle arrest. In terms of processing, phosphorylation at Ser-190 is required for interaction with CDK2, CDK4 and SWI/SNF complex leading to cell cycle inhibition. Dephosphorylated at Ser-190 by protein phosphatase 2A (PP2A) through PI3K/AKT signaling pathway regulation. Phosphorylation at Thr-226 and Thr-230 by GSK3 is constitutive in adipose tissue and lung. In liver, both Thr-226 and Thr-230 are phosphorylated only during feeding but not during fasting. Phosphorylation of the GSK3 consensus sites selectively decreases transactivation activity on IRE-controlled promoters. Sumoylated, sumoylation blocks the inhibitory effect on cell proliferation by disrupting the interaction with SMARCA2. Post-translationally, ubiquitinated by COP1 upon interaction with TRIB1.

The protein resides in the nucleus. Its subcellular location is the nucleolus. Functionally, transcription factor that coordinates proliferation arrest and the differentiation of myeloid progenitors, adipocytes, hepatocytes, and cells of the lung and the placenta. Binds directly to the consensus DNA sequence 5'-T[TG]NNGNAA[TG]-3' acting as an activator on distinct target genes. During early embryogenesis, plays essential and redundant functions with CEBPB. Essential for the transition from common myeloid progenitors (CMP) to granulocyte/monocyte progenitors (GMP). Critical for the proper development of the liver and the lung. Necessary for terminal adipocyte differentiation, is required for postnatal maintenance of systemic energy homeostasis and lipid storage. To regulate these different processes at the proper moment and tissue, interplays with other transcription factors and modulators. Down-regulates the expression of genes that maintain cells in an undifferentiated and proliferative state through E2F1 repression, which is critical for its ability to induce adipocyte and granulocyte terminal differentiation. Reciprocally E2F1 blocks adipocyte differentiation by binding to specific promoters and repressing CEBPA binding to its target gene promoters. Proliferation arrest also depends on a functional binding to SWI/SNF complex. In liver, regulates gluconeogenesis and lipogenesis through different mechanisms. To regulate gluconeogenesis, functionally cooperates with FOXO1 binding to IRE-controlled promoters and regulating the expression of target genes such as PCK1 or G6PC1. To modulate lipogenesis, interacts and transcriptionally synergizes with SREBF1 in promoter activation of specific lipogenic target genes such as ACAS2. In adipose tissue, seems to act as FOXO1 coactivator accessing to ADIPOQ promoter through FOXO1 binding sites. Can act as dominant-negative. Binds DNA and have transctivation activity, even if much less efficiently than isoform 2. Does not inhibit cell proliferation. In terms of biological role, directly and specifically enhances ribosomal DNA transcription interacting with RNA polymerase I-specific cofactors and inducing histone acetylation. The protein is CCAAT/enhancer-binding protein alpha of Homo sapiens (Human).